The sequence spans 415 residues: Exodeoxyribonuclease 7 large subunit (415 aa).

The protein belongs to the XseA family. Heterooligomer composed of large and small subunits.

Its subcellular location is the cytoplasm. It carries out the reaction Exonucleolytic cleavage in either 5'- to 3'- or 3'- to 5'-direction to yield nucleoside 5'-phosphates.. Bidirectionally degrades single-stranded DNA into large acid-insoluble oligonucleotides, which are then degraded further into small acid-soluble oligonucleotides. The sequence is that of Exodeoxyribonuclease 7 large subunit from Mycobacterium bovis (strain ATCC BAA-935 / AF2122/97).